The sequence spans 151 residues: NADPH-dependent 7-cyano-7-deazaguanine reductase (151 aa).

Residue Cys51 is the Thioimide intermediate of the active site. The active-site Proton donor is Asp58. Substrate is bound by residues 73 to 75 (VES) and 92 to 93 (HE).

Belongs to the GTP cyclohydrolase I family. QueF type 1 subfamily.

It localises to the cytoplasm. The catalysed reaction is 7-aminomethyl-7-carbaguanine + 2 NADP(+) = 7-cyano-7-deazaguanine + 2 NADPH + 3 H(+). The protein operates within tRNA modification; tRNA-queuosine biosynthesis. Catalyzes the NADPH-dependent reduction of 7-cyano-7-deazaguanine (preQ0) to 7-aminomethyl-7-deazaguanine (preQ1). This Bacteroides fragilis (strain ATCC 25285 / DSM 2151 / CCUG 4856 / JCM 11019 / LMG 10263 / NCTC 9343 / Onslow / VPI 2553 / EN-2) protein is NADPH-dependent 7-cyano-7-deazaguanine reductase.